Here is a 314-residue protein sequence, read N- to C-terminus: Ribosomal protein L11 methyltransferase (314 aa).

S-adenosyl-L-methionine-binding residues include Thr161, Gly182, Asp204, and Asn248.

The protein belongs to the methyltransferase superfamily. PrmA family.

The protein resides in the cytoplasm. It carries out the reaction L-lysyl-[protein] + 3 S-adenosyl-L-methionine = N(6),N(6),N(6)-trimethyl-L-lysyl-[protein] + 3 S-adenosyl-L-homocysteine + 3 H(+). Its function is as follows. Methylates ribosomal protein L11. This Listeria innocua serovar 6a (strain ATCC BAA-680 / CLIP 11262) protein is Ribosomal protein L11 methyltransferase.